Here is a 235-residue protein sequence, read N- to C-terminus: RNA pyrophosphohydrolase (235 aa).

The Nudix hydrolase domain occupies 6 to 149; the sequence is GFRPNVGIIL…KREVYQLALS (144 aa). The Nudix box motif lies at 38–59; sequence GGIKYGETPEQAMFRELHEEVG. Residues 161-235 are disordered; it reads APLSPYGRGG…PDDTAPKDNS (75 aa). Residues 171–196 show a composition bias toward basic and acidic residues; sequence QHRERDGRDARDSRERSSDQGGRNEQ. The segment covering 203–220 has biased composition (low complexity); that stretch reads TVTTTTVIVETVSVSAPT.

The protein belongs to the Nudix hydrolase family. RppH subfamily. A divalent metal cation serves as cofactor.

Accelerates the degradation of transcripts by removing pyrophosphate from the 5'-end of triphosphorylated RNA, leading to a more labile monophosphorylated state that can stimulate subsequent ribonuclease cleavage. The sequence is that of RNA pyrophosphohydrolase from Ralstonia pickettii (strain 12J).